We begin with the raw amino-acid sequence, 136 residues long: Small ribosomal subunit protein uS8 (136 aa).

It belongs to the universal ribosomal protein uS8 family. In terms of assembly, part of the 30S ribosomal subunit. Contacts proteins S5 and S12.

Functionally, one of the primary rRNA binding proteins, it binds directly to 16S rRNA central domain where it helps coordinate assembly of the platform of the 30S subunit. This is Small ribosomal subunit protein uS8 from Frankia alni (strain DSM 45986 / CECT 9034 / ACN14a).